Here is a 369-residue protein sequence, read N- to C-terminus: Chorismate synthase (369 aa).

Residues Arg48 and Arg54 each coordinate NADP(+). FMN is bound by residues Arg125 to Ser127, Asn238 to Ala239, Gly278, Lys293 to Ser297, and Arg319.

It belongs to the chorismate synthase family. Homotetramer. It depends on FMNH2 as a cofactor.

The catalysed reaction is 5-O-(1-carboxyvinyl)-3-phosphoshikimate = chorismate + phosphate. Its pathway is metabolic intermediate biosynthesis; chorismate biosynthesis; chorismate from D-erythrose 4-phosphate and phosphoenolpyruvate: step 7/7. Catalyzes the anti-1,4-elimination of the C-3 phosphate and the C-6 proR hydrogen from 5-enolpyruvylshikimate-3-phosphate (EPSP) to yield chorismate, which is the branch point compound that serves as the starting substrate for the three terminal pathways of aromatic amino acid biosynthesis. This reaction introduces a second double bond into the aromatic ring system. This Burkholderia mallei (strain NCTC 10229) protein is Chorismate synthase.